We begin with the raw amino-acid sequence, 425 residues long: Serine--tRNA ligase (425 aa).

L-serine is bound at residue 230-232; that stretch reads TAE. 261–263 is an ATP binding site; the sequence is RSE. Glu284 contacts L-serine. An ATP-binding site is contributed by 348–351; that stretch reads EISS. Ser384 lines the L-serine pocket.

This sequence belongs to the class-II aminoacyl-tRNA synthetase family. Type-1 seryl-tRNA synthetase subfamily. Homodimer. The tRNA molecule binds across the dimer.

It is found in the cytoplasm. It catalyses the reaction tRNA(Ser) + L-serine + ATP = L-seryl-tRNA(Ser) + AMP + diphosphate + H(+). The enzyme catalyses tRNA(Sec) + L-serine + ATP = L-seryl-tRNA(Sec) + AMP + diphosphate + H(+). Its pathway is aminoacyl-tRNA biosynthesis; selenocysteinyl-tRNA(Sec) biosynthesis; L-seryl-tRNA(Sec) from L-serine and tRNA(Sec): step 1/1. Catalyzes the attachment of serine to tRNA(Ser). Is also able to aminoacylate tRNA(Sec) with serine, to form the misacylated tRNA L-seryl-tRNA(Sec), which will be further converted into selenocysteinyl-tRNA(Sec). The chain is Serine--tRNA ligase from Nitratidesulfovibrio vulgaris (strain DSM 19637 / Miyazaki F) (Desulfovibrio vulgaris).